Consider the following 313-residue polypeptide: Malate dehydrogenase (313 aa).

Residue 11-16 coordinates NAD(+); sequence GAGHTG. 2 residues coordinate substrate: R86 and R92. NAD(+) contacts are provided by residues N99 and 122-124; that span reads LTN. Positions 124 and 155 each coordinate substrate. The active-site Proton acceptor is the H179.

Belongs to the LDH/MDH superfamily. MDH type 3 family.

It catalyses the reaction (S)-malate + NAD(+) = oxaloacetate + NADH + H(+). In terms of biological role, catalyzes the reversible oxidation of malate to oxaloacetate. This is Malate dehydrogenase from Staphylococcus epidermidis (strain ATCC 35984 / DSM 28319 / BCRC 17069 / CCUG 31568 / BM 3577 / RP62A).